A 347-amino-acid polypeptide reads, in one-letter code: Protein RecA (347 aa).

70 to 77 (GPESSGKT) serves as a coordination point for ATP.

It belongs to the RecA family.

It is found in the cytoplasm. Can catalyze the hydrolysis of ATP in the presence of single-stranded DNA, the ATP-dependent uptake of single-stranded DNA by duplex DNA, and the ATP-dependent hybridization of homologous single-stranded DNAs. It interacts with LexA causing its activation and leading to its autocatalytic cleavage. The protein is Protein RecA of Ruegeria pomeroyi (strain ATCC 700808 / DSM 15171 / DSS-3) (Silicibacter pomeroyi).